A 146-amino-acid polypeptide reads, in one-letter code: Hemoglobin subunit beta (146 aa).

V1 is modified (N-acetylvaline). A Globin domain is found at 2-146 (HLTPEEKSAV…VANALAHKYH (145 aa)). At T12 the chain carries Phosphothreonine. Phosphoserine is present on S44. At K59 the chain carries N6-acetyllysine. H63 is a binding site for heme b. Residue K82 is modified to N6-acetyllysine. H92 is a heme b binding site. Position 93 is an S-nitrosocysteine (C93). Position 144 is an N6-acetyllysine (K144).

This sequence belongs to the globin family. In terms of assembly, heterotetramer of two alpha chains and two beta chains. As to expression, red blood cells.

Functionally, involved in oxygen transport from the lung to the various peripheral tissues. This is Hemoglobin subunit beta (HBB) from Hylobates lar (Lar gibbon).